The chain runs to 227 residues: 7-cyano-7-deazaguanine synthase (227 aa).

9-19 serves as a coordination point for ATP; sequence LSGGLDSATVL. The Zn(2+) site is built by Cys189, Cys199, Cys202, and Cys205.

It belongs to the QueC family. Requires Zn(2+) as cofactor.

It catalyses the reaction 7-carboxy-7-deazaguanine + NH4(+) + ATP = 7-cyano-7-deazaguanine + ADP + phosphate + H2O + H(+). Its pathway is purine metabolism; 7-cyano-7-deazaguanine biosynthesis. Catalyzes the ATP-dependent conversion of 7-carboxy-7-deazaguanine (CDG) to 7-cyano-7-deazaguanine (preQ(0)). The protein is 7-cyano-7-deazaguanine synthase of Cupriavidus metallidurans (strain ATCC 43123 / DSM 2839 / NBRC 102507 / CH34) (Ralstonia metallidurans).